The sequence spans 358 residues: uncharacterized protein (358 aa).

The segment at 324-358 is disordered; sequence DMEVEETPPTTNKDLPRGATQPKRNSIKRVSKLID. Residues 348 to 358 show a composition bias toward basic residues; it reads NSIKRVSKLID.

This is an uncharacterized protein from Mycoplasma pneumoniae (strain ATCC 29342 / M129 / Subtype 1) (Mycoplasmoides pneumoniae).